The primary structure comprises 347 residues: Anthranilate phosphoribosyltransferase (347 aa).

Residues G88, G91–D92, T96, N98–T101, K116–S124, and S128 contribute to the 5-phospho-alpha-D-ribose 1-diphosphate site. Residue G88 participates in anthranilate binding. S100 contacts Mg(2+). N119 provides a ligand contact to anthranilate. An anthranilate-binding site is contributed by R174. Mg(2+) contacts are provided by D232 and E233.

This sequence belongs to the anthranilate phosphoribosyltransferase family. Homodimer. It depends on Mg(2+) as a cofactor.

The enzyme catalyses N-(5-phospho-beta-D-ribosyl)anthranilate + diphosphate = 5-phospho-alpha-D-ribose 1-diphosphate + anthranilate. Its pathway is amino-acid biosynthesis; L-tryptophan biosynthesis; L-tryptophan from chorismate: step 2/5. In terms of biological role, catalyzes the transfer of the phosphoribosyl group of 5-phosphorylribose-1-pyrophosphate (PRPP) to anthranilate to yield N-(5'-phosphoribosyl)-anthranilate (PRA). This is Anthranilate phosphoribosyltransferase from Shewanella oneidensis (strain ATCC 700550 / JCM 31522 / CIP 106686 / LMG 19005 / NCIMB 14063 / MR-1).